Reading from the N-terminus, the 478-residue chain is Hepatitis A virus cellular receptor 1 (478 aa).

The N-terminal stretch at 1–24 is a signal peptide; it reads MADPIMHLQVVILSLILHLADSVA. Positions 25-126 constitute an Ig-like V-type domain; that stretch reads DSVNVDGVAG…WFNDMKITIS (102 aa). Residues 25-397 are Extracellular-facing; the sequence is DSVNVDGVAG…SPQMVNTTEG (373 aa). Intrachain disulfides connect C41/C110, C51/C62, and C57/C109. N70 and N87 each carry an N-linked (GlcNAc...) asparagine glycan. Tandem repeats lie at residues 148–155, 156–161, 162–167, 168–173, 174–179, 180–185, 186–191, 192–197, 198–201, 202–207, 208–211, 212–217, 218–221, 222–227, 228–233, 234–239, 240–245, 246–251, 252–257, 258–263, 264–268, 269–273, 274–279, 280–285, 286–291, 292–297, 298–303, and 304–309. Residues 148 to 309 are 28 X 6 AA approximate tandem repeats of L-P-[MT]-T-[MT]-T; it reads VPTTTTTTLP…TTTTLPTTTM (162 aa). A disordered region spans residues 187–303; that stretch reads PTTTTVPMTT…TTTTLPTTTT (117 aa). Disordered regions lie at residues 320–339 and 344–370; these read PMQD…PAET and LLGA…TVTE. Residues 348–370 are compositionally biased toward polar residues; the sequence is TRTQPTSSPLYSYTTDGSDTVTE. N-linked (GlcNAc...) asparagine glycans are attached at residues N379 and N393. Residues 398-418 traverse the membrane as a helical segment; the sequence is IYAGVCISVLVLLAVLGVVIA. Residues 419–478 are Cytoplasmic-facing; the sequence is KKYFFKKEIQQLSVSFSNHQFKTLQNAVKKEVHAEDNIYIENNLYAMNQDPVVLFESLRP.

It belongs to the immunoglobulin superfamily. TIM family. In terms of assembly, interacts with STAM. Interacts with SELPLG.

The protein localises to the cell membrane. In terms of biological role, phosphatidylserine receptor that plays an important functional role in regulatory B-cells homeostasis including generation, expansion and suppressor functions. As P-selectin/SELPLG ligand, plays a specialized role in activated but not naive T-cell trafficking during inflammatory responses. Controls thereby T-cell accumulation in the inflamed central nervous system (CNS) and the induction of autoimmune disease. Also regulates expression of various anti-inflammatory cytokines and co-inhibitory ligands including IL10. Acts as a regulator of T-cell proliferation. May play a role in kidney injury and repair. The chain is Hepatitis A virus cellular receptor 1 (HAVCR1) from Chlorocebus aethiops (Green monkey).